The sequence spans 1542 residues: Pleiotropic ABC efflux transporter of multiple drugs PDH1 (1542 aa).

Over residues 1-14 the composition is skewed to low complexity; sequence MNTPDDSSVSSVDS. Residues 1–61 are disordered; sequence MNTPDDSSVS…APADGSAPLD (61 aa). Residues 1-517 are Cytoplasmic-facing; the sequence is MNTPDDSSVS…LIRNFWRIKN (517 aa). The segment covering 24 to 33 has biased composition (basic and acidic residues); sequence NVEKRIRELA. Over residues 35–47 the composition is skewed to polar residues; that stretch reads SLTQQSLTSSNRS. Positions 153–409 constitute an ABC transporter 1 domain; it reads VKLLNAVWRK…FQKMGYFCPK (257 aa). 6 helical membrane passes run 518–540, 552–574, 603–625, 634–652, 662–684, and 773–792; these read SASV…GSMF, FYFR…LLEI, VISE…YFLV, FFFY…SHLF, LQEA…GFAI, and GFGV…LILC. The Cytoplasmic segment spans residues 793-1220; that stretch reads EFNEGAKQKG…LFQQYWRTPD (428 aa). Positions 825-834 are enriched in basic and acidic residues; sequence TKMHTDKNDI. The tract at residues 825–846 is disordered; the sequence is TKMHTDKNDIENNSESITSNAT. Residues 835-846 show a composition bias toward polar residues; that stretch reads ENNSESITSNAT. The ABC transporter 2 domain maps to 885–1128; that stretch reads FHWQNLCYDV…MIKYFEDHGA (244 aa). 921-928 lines the ATP pocket; the sequence is GASGAGKT. 6 consecutive transmembrane segments (helical) span residues 1221 to 1241, 1256 to 1276, 1296 to 1316, 1342 to 1362, 1370 to 1390, and 1495 to 1515; these read YLWS…FTFF, SIFM…PTFV, AFIL…GTLA, LFWL…LFVI, TAAH…GVMA, and GIFI…YWLA. The Cytoplasmic portion of the chain corresponds to 1516-1542; that stretch reads RVPKTNGKIAKNGKTAKVNFIRRLIPF.

It belongs to the ABC transporter superfamily. ABCG family. PDR (TC 3.A.1.205) subfamily. Post-translationally, phosphorylated by PKA. Dephosphorylated on glucose depletion and independently rephosphorylated during glucose exposure or under stress.

Its subcellular location is the cell membrane. Its function is as follows. Pleiotropic ABC efflux transporter that confers resistance to structurally and functionally unrelated compounds including caspofungin or azoles such as fluconazole, itraconazole, posaconazole, voriconazole, and isavuconazole. Does not play a role in the azole resistance in mature biofilms. This is Pleiotropic ABC efflux transporter of multiple drugs PDH1 from Candida glabrata (strain ATCC 2001 / BCRC 20586 / JCM 3761 / NBRC 0622 / NRRL Y-65 / CBS 138) (Yeast).